Here is a 366-residue protein sequence, read N- to C-terminus: Ribosomal RNA large subunit methyltransferase M (366 aa).

S-adenosyl-L-methionine is bound by residues Ser188, 221–224 (CPGG), Asp240, Asp260, and Asp277. The active-site Proton acceptor is the Lys306.

This sequence belongs to the class I-like SAM-binding methyltransferase superfamily. RNA methyltransferase RlmE family. RlmM subfamily. In terms of assembly, monomer.

The protein resides in the cytoplasm. The catalysed reaction is cytidine(2498) in 23S rRNA + S-adenosyl-L-methionine = 2'-O-methylcytidine(2498) in 23S rRNA + S-adenosyl-L-homocysteine + H(+). Functionally, catalyzes the 2'-O-methylation at nucleotide C2498 in 23S rRNA. This Escherichia coli O139:H28 (strain E24377A / ETEC) protein is Ribosomal RNA large subunit methyltransferase M.